A 135-amino-acid chain; its full sequence is Large ribosomal subunit protein bL19 (135 aa).

This sequence belongs to the bacterial ribosomal protein bL19 family.

Functionally, this protein is located at the 30S-50S ribosomal subunit interface and may play a role in the structure and function of the aminoacyl-tRNA binding site. This Protochlamydia amoebophila (strain UWE25) protein is Large ribosomal subunit protein bL19.